The chain runs to 61 residues: Large ribosomal subunit protein uL29 (61 aa).

It belongs to the universal ribosomal protein uL29 family.

This chain is Large ribosomal subunit protein uL29, found in Nitratidesulfovibrio vulgaris (strain ATCC 29579 / DSM 644 / CCUG 34227 / NCIMB 8303 / VKM B-1760 / Hildenborough) (Desulfovibrio vulgaris).